Consider the following 514-residue polypeptide: MQQLNPSEISEIIKGRIDKLDVTSQARNEGTVVSVSDGIVRIHGLADVMYGEMIEFPGGVYGMALNLEQDSVGAVVLGAYTSLAEGMSAKCTGRILEVPVGKELLGRVVDALGNPVDGKGPLGNTETDAVEKVAPGVIWRKSVDQPVQTGYKAVDAMIPVGRGQRELIIGDRQIGKTALAIDAIINQKNSGIFCVYVAIGQKQSTIANVVRKLEENGALANTIIVAASASESPALQFLAPYSGCTMGEFFRDRGEDALIVYDDLSKQAVAYRQISLLLRRPPGREAYPGDVFYLHSRLLERASRVSEEYVEKFTNGAVTGKTGSLTALPIIETQAGDVSAFVPTNVISITDGQIFLESAMFNSGIRPAVNAGVSVSRVGGAAQTKIIKKLSGGIRTALAQYRELAAFAQFASDLDEATRKQLEHGQRVTELMKQKQYAPMSIADMALSLYAAERGFLTDVEIAKVGSFEQALIAYFNRDHAELMAKINVKGDFNDDIDAGMKAGIEKFKATQTW.

Position 170–177 (glycine 170–threonine 177) interacts with ATP.

Belongs to the ATPase alpha/beta chains family. F-type ATPases have 2 components, CF(1) - the catalytic core - and CF(0) - the membrane proton channel. CF(1) has five subunits: alpha(3), beta(3), gamma(1), delta(1), epsilon(1). CF(0) has three main subunits: a(1), b(2) and c(9-12). The alpha and beta chains form an alternating ring which encloses part of the gamma chain. CF(1) is attached to CF(0) by a central stalk formed by the gamma and epsilon chains, while a peripheral stalk is formed by the delta and b chains.

It localises to the cell inner membrane. The enzyme catalyses ATP + H2O + 4 H(+)(in) = ADP + phosphate + 5 H(+)(out). In terms of biological role, produces ATP from ADP in the presence of a proton gradient across the membrane. The alpha chain is a regulatory subunit. This Pseudomonas fluorescens (strain SBW25) protein is ATP synthase subunit alpha.